The sequence spans 637 residues: Chaperone protein DnaK (637 aa).

At threonine 196 the chain carries Phosphothreonine; by autocatalysis. Disordered stretches follow at residues 484-528 (KATG…EVDT) and 598-637 (TEAG…VDDK). Basic and acidic residues predominate over residues 501 to 528 (SETEIEKMKKDASSHADEDKKKKEEVDT). The segment covering 600–620 (AGAPGAAGAAGAAGQGQSASS) has biased composition (low complexity). Residues 621 to 637 (GKDDEVKNADFEVVDDK) show a composition bias toward basic and acidic residues.

It belongs to the heat shock protein 70 family.

Its function is as follows. Acts as a chaperone. The protein is Chaperone protein DnaK of Chloroherpeton thalassium (strain ATCC 35110 / GB-78).